Here is a 994-residue protein sequence, read N- to C-terminus: Phosphoenolpyruvate carboxylase (994 aa).

The segment at 1–66 is disordered; that stretch reads MKSSGSARAT…QGRTREDKDR (66 aa). 2 stretches are compositionally biased toward low complexity: residues 14-25 and 41-54; these read AVSSSSAPAHAE and AAAR…AASA. Active-site residues include histidine 204 and lysine 646.

This sequence belongs to the PEPCase type 1 family. The cofactor is Mg(2+).

The catalysed reaction is oxaloacetate + phosphate = phosphoenolpyruvate + hydrogencarbonate. Forms oxaloacetate, a four-carbon dicarboxylic acid source for the tricarboxylic acid cycle. The sequence is that of Phosphoenolpyruvate carboxylase from Burkholderia pseudomallei (strain 668).